Here is a 214-residue protein sequence, read N- to C-terminus: Thiamine-phosphate synthase (214 aa).

4-amino-2-methyl-5-(diphosphooxymethyl)pyrimidine-binding positions include 40 to 44 (QLREK) and Asn72. Residues Asp73 and Asp92 each coordinate Mg(2+). Ser110 serves as a coordination point for 4-amino-2-methyl-5-(diphosphooxymethyl)pyrimidine. 137–139 (SPT) is a binding site for 2-[(2R,5Z)-2-carboxy-4-methylthiazol-5(2H)-ylidene]ethyl phosphate. Lys140 contacts 4-amino-2-methyl-5-(diphosphooxymethyl)pyrimidine. Residues Gly167 and 185-186 (IS) contribute to the 2-[(2R,5Z)-2-carboxy-4-methylthiazol-5(2H)-ylidene]ethyl phosphate site.

It belongs to the thiamine-phosphate synthase family. Mg(2+) is required as a cofactor.

It catalyses the reaction 2-[(2R,5Z)-2-carboxy-4-methylthiazol-5(2H)-ylidene]ethyl phosphate + 4-amino-2-methyl-5-(diphosphooxymethyl)pyrimidine + 2 H(+) = thiamine phosphate + CO2 + diphosphate. It carries out the reaction 2-(2-carboxy-4-methylthiazol-5-yl)ethyl phosphate + 4-amino-2-methyl-5-(diphosphooxymethyl)pyrimidine + 2 H(+) = thiamine phosphate + CO2 + diphosphate. The enzyme catalyses 4-methyl-5-(2-phosphooxyethyl)-thiazole + 4-amino-2-methyl-5-(diphosphooxymethyl)pyrimidine + H(+) = thiamine phosphate + diphosphate. It participates in cofactor biosynthesis; thiamine diphosphate biosynthesis; thiamine phosphate from 4-amino-2-methyl-5-diphosphomethylpyrimidine and 4-methyl-5-(2-phosphoethyl)-thiazole: step 1/1. In terms of biological role, condenses 4-methyl-5-(beta-hydroxyethyl)thiazole monophosphate (THZ-P) and 2-methyl-4-amino-5-hydroxymethyl pyrimidine pyrophosphate (HMP-PP) to form thiamine monophosphate (TMP). The polypeptide is Thiamine-phosphate synthase (Wolinella succinogenes (strain ATCC 29543 / DSM 1740 / CCUG 13145 / JCM 31913 / LMG 7466 / NCTC 11488 / FDC 602W) (Vibrio succinogenes)).